Reading from the N-terminus, the 148-residue chain is Large ribosomal subunit protein uL15 (148 aa).

Residues 1–10 (MQLHNLEYKK) are compositionally biased toward basic and acidic residues. Residues 1-42 (MQLHNLEYKKGSRNHKEKRVGRGHGSGLGKTSGRGQDGQKAR) are disordered. Residues 11–22 (GSRNHKEKRVGR) are compositionally biased toward basic residues. Over residues 23-36 (GHGSGLGKTSGRGQ) the composition is skewed to gly residues.

This sequence belongs to the universal ribosomal protein uL15 family. In terms of assembly, part of the 50S ribosomal subunit.

In terms of biological role, binds to the 23S rRNA. This is Large ribosomal subunit protein uL15 from Ureaplasma parvum serovar 3 (strain ATCC 27815 / 27 / NCTC 11736).